Here is a 97-residue protein sequence, read N- to C-terminus: YcgL domain-containing protein PA14_47450 (97 aa).

In terms of domain architecture, YcgL spans 3 to 87; it reads RICSVYKSPR…GEEEYIEHLP (85 aa).

In Pseudomonas aeruginosa (strain UCBPP-PA14), this protein is YcgL domain-containing protein PA14_47450.